A 436-amino-acid chain; its full sequence is 3-ketoacyl-CoA thiolase (436 aa).

The active-site Acyl-thioester intermediate is the Cys99. Active-site proton acceptor residues include His392 and Cys422.

It belongs to the thiolase-like superfamily. Thiolase family. Heterotetramer of two alpha chains (FadJ) and two beta chains (FadI).

Its subcellular location is the cytoplasm. The enzyme catalyses an acyl-CoA + acetyl-CoA = a 3-oxoacyl-CoA + CoA. Its pathway is lipid metabolism; fatty acid beta-oxidation. Functionally, catalyzes the final step of fatty acid oxidation in which acetyl-CoA is released and the CoA ester of a fatty acid two carbons shorter is formed. The chain is 3-ketoacyl-CoA thiolase from Photobacterium profundum (strain SS9).